Reading from the N-terminus, the 346-residue chain is MLVLGIESSCDETGLALYDTGRGLLAHALHSQIAMHREYGGVVPELASRDHIRRALPLLEEVLAAGGARREDIDAIAFTQGPGLAGALLVGASIANALAFAWDKPTIGIHHLEGHLLSPLLVAEPPPFPFVALLVSGGHTQLMRVTDVGVYETLGETLDDAAGEAFDKTAKLLGLGYPGGPEVSKLAEAGTPGAVVLPRPMLHSGDLDFSFSGLKTAVLTQMKKLEAAHASGAELDRAKADLARGFVDAAVDVLVAKSLAALKKTRLKRLVVAGGVGANRQLRAALSAAAGKRGFDVHYPDLALCTDNGAMIALAGALRLARWPSQASRDYAFTVKPRWDLASLAR.

Residues H111 and H115 each coordinate Fe cation. Residues 134–138, D167, G180, and N279 each bind substrate; that span reads LVSGG. D307 serves as a coordination point for Fe cation.

This sequence belongs to the KAE1 / TsaD family. It depends on Fe(2+) as a cofactor.

Its subcellular location is the cytoplasm. It catalyses the reaction L-threonylcarbamoyladenylate + adenosine(37) in tRNA = N(6)-L-threonylcarbamoyladenosine(37) in tRNA + AMP + H(+). Its function is as follows. Required for the formation of a threonylcarbamoyl group on adenosine at position 37 (t(6)A37) in tRNAs that read codons beginning with adenine. Is involved in the transfer of the threonylcarbamoyl moiety of threonylcarbamoyl-AMP (TC-AMP) to the N6 group of A37, together with TsaE and TsaB. TsaD likely plays a direct catalytic role in this reaction. The sequence is that of tRNA N6-adenosine threonylcarbamoyltransferase from Burkholderia thailandensis (strain ATCC 700388 / DSM 13276 / CCUG 48851 / CIP 106301 / E264).